Reading from the N-terminus, the 243-residue chain is Probable aquaporin SIP1-2 (243 aa).

2 helical membrane passes run Val12–Val32 and Trp42–Ile62. Residues Asn72 to Cys74 carry the NPA 1 motif. The next 3 membrane-spanning stretches (helical) occupy residues Phe90–Ile110, Gly135–Leu155, and Leu162–Phe182. Residues Asn188–Ala190 carry the NPA 2 motif. A helical membrane pass occupies residues Val210–Phe230.

It belongs to the MIP/aquaporin (TC 1.A.8) family. SIP (TC 1.A.8.10) subfamily. As to expression, expressed in roots and above ground. Expressed in elongating regions of the root tips, cotyledons, minor veins and hydathode cells of the rosette leaves. Weakly expressed in vascular tissues of the flower petals, filaments of stamens, upper part of the styles and receptacles of the siliques.

The protein resides in the endoplasmic reticulum membrane. Functionally, water channel required to facilitate the transport of water across cell membrane. This is Probable aquaporin SIP1-2 (SIP1-2) from Arabidopsis thaliana (Mouse-ear cress).